The following is a 513-amino-acid chain: Ribonuclease Y (513 aa).

Residues 6–26 (YIIIAVVIIIICVILGLYVVD) traverse the membrane as a helical segment. The segment at 35 to 59 (EASKEARRLKEEAERDAEAKKKEAI) is disordered. One can recognise a KH domain in the interval 203 to 288 (TVHVVNLPND…EMVEKAKKEV (86 aa)). The 94-residue stretch at 329-422 (VLKHSIEVSH…VQAADAISAA (94 aa)) folds into the HD domain.

The protein belongs to the RNase Y family.

Its subcellular location is the cell membrane. Functionally, endoribonuclease that initiates mRNA decay. In Clostridium botulinum (strain Okra / Type B1), this protein is Ribonuclease Y.